A 241-amino-acid polypeptide reads, in one-letter code: Small ribosomal subunit protein uS2 (241 aa).

Belongs to the universal ribosomal protein uS2 family.

The chain is Small ribosomal subunit protein uS2 from Salmonella agona (strain SL483).